Here is an 882-residue protein sequence, read N- to C-terminus: Valine--tRNA ligase (882 aa).

The 'HIGH' region signature appears at 45–55 (PNVTGKLHLGH). The 'KMSKS' region motif lies at 519–523 (KMSKS). Lys-522 serves as a coordination point for ATP. Residues 808–877 (LADLLNVEEE…DATQERIVEM (70 aa)) adopt a coiled-coil conformation.

This sequence belongs to the class-I aminoacyl-tRNA synthetase family. ValS type 1 subfamily. Monomer.

It is found in the cytoplasm. The enzyme catalyses tRNA(Val) + L-valine + ATP = L-valyl-tRNA(Val) + AMP + diphosphate. Catalyzes the attachment of valine to tRNA(Val). As ValRS can inadvertently accommodate and process structurally similar amino acids such as threonine, to avoid such errors, it has a 'posttransfer' editing activity that hydrolyzes mischarged Thr-tRNA(Val) in a tRNA-dependent manner. The chain is Valine--tRNA ligase from Streptococcus pyogenes serotype M6 (strain ATCC BAA-946 / MGAS10394).